Reading from the N-terminus, the 225-residue chain is UPF0758 protein SZO_09140 (225 aa).

Residues 102 to 224 (PVLSSAQVAE…YYSFREKSDL (123 aa)) form the MPN domain. Zn(2+)-binding residues include His-173, His-175, and Asp-186. The JAMM motif motif lies at 173 to 186 (HNHPSGLTKPSAND).

The protein belongs to the UPF0758 family.

In Streptococcus equi subsp. zooepidemicus (strain H70), this protein is UPF0758 protein SZO_09140.